Consider the following 157-residue polypeptide: 2-C-methyl-D-erythritol 2,4-cyclodiphosphate synthase (157 aa).

The a divalent metal cation site is built by D8 and H10. Residues 8 to 10 (DVH) and 34 to 35 (HS) each bind 4-CDP-2-C-methyl-D-erythritol 2-phosphate. Position 42 (H42) interacts with a divalent metal cation. Residues 56–58 (DIG), 132–135 (TTNE), and R142 contribute to the 4-CDP-2-C-methyl-D-erythritol 2-phosphate site.

This sequence belongs to the IspF family. As to quaternary structure, homotrimer. Requires a divalent metal cation as cofactor.

It carries out the reaction 4-CDP-2-C-methyl-D-erythritol 2-phosphate = 2-C-methyl-D-erythritol 2,4-cyclic diphosphate + CMP. The protein operates within isoprenoid biosynthesis; isopentenyl diphosphate biosynthesis via DXP pathway; isopentenyl diphosphate from 1-deoxy-D-xylulose 5-phosphate: step 4/6. Involved in the biosynthesis of isopentenyl diphosphate (IPP) and dimethylallyl diphosphate (DMAPP), two major building blocks of isoprenoid compounds. Catalyzes the conversion of 4-diphosphocytidyl-2-C-methyl-D-erythritol 2-phosphate (CDP-ME2P) to 2-C-methyl-D-erythritol 2,4-cyclodiphosphate (ME-CPP) with a corresponding release of cytidine 5-monophosphate (CMP). This is 2-C-methyl-D-erythritol 2,4-cyclodiphosphate synthase from Prosthecochloris aestuarii (strain DSM 271 / SK 413).